Reading from the N-terminus, the 266-residue chain is Protein STAY-GREEN homolog, chloroplastic (266 aa).

The N-terminal 50 residues, 1–50, are a transit peptide targeting the chloroplast; it reads MGTLTASLVAPSKLNPEKHSSLFVYKTRRKSHKNQSIVPVARLFGPAIFE.

This sequence belongs to the staygreen family.

The protein resides in the plastid. Its subcellular location is the chloroplast. In terms of biological role, required to trigger chlorophyll degradation during leaf senescence and fruit ripening. The chain is Protein STAY-GREEN homolog, chloroplastic from Capsicum annuum (Capsicum pepper).